The following is a 118-amino-acid chain: MLSPKGAILIFFLTGFFLSIIILVLNYLLSPKSKSLIKRETYECGLETIGPTWVQFKGNYFMYALVFVLFDVETIFLYPWAVRFNVLGLFAFVEMVIFIGILVLGLWYAWKEGALEWK.

3 consecutive transmembrane segments (helical) span residues Ile8 to Leu28, Phe61 to Ala81, and Val86 to Leu106.

This sequence belongs to the complex I subunit 3 family. As to quaternary structure, NDH-1 is composed of 14 different subunits. Subunits NuoA, H, J, K, L, M, N constitute the membrane sector of the complex.

The protein localises to the cell membrane. The enzyme catalyses a quinone + NADH + 5 H(+)(in) = a quinol + NAD(+) + 4 H(+)(out). Functionally, NDH-1 shuttles electrons from NADH, via FMN and iron-sulfur (Fe-S) centers, to quinones in the respiratory chain. The immediate electron acceptor for the enzyme in this species is believed to be a menaquinone. Couples the redox reaction to proton translocation (for every two electrons transferred, four hydrogen ions are translocated across the cytoplasmic membrane), and thus conserves the redox energy in a proton gradient. In Carboxydothermus hydrogenoformans (strain ATCC BAA-161 / DSM 6008 / Z-2901), this protein is NADH-quinone oxidoreductase subunit A.